A 2135-amino-acid chain; its full sequence is Protein SUBSTANDARD STARCH GRAIN 4, chloroplastic (2135 aa).

Low complexity-rich tracts occupy residues 1–10 (MSHCLRASPF) and 72–84 (QHQP…RQQQ). Residues 1–42 (MSHCLRASPFLSPPPPLLHPSRRRRHRQGGCIHTSPGTRPLV) constitute a chloroplast transit peptide. Disordered regions lie at residues 1–44 (MSHC…LVAR) and 58–89 (SDSS…PPPP). Topologically, residues 43 to 104 (ARARFDPPPL…ASLAPLWREG (62 aa)) are stromal. Residues 105–125 (LFLVRCSVFAAALSVAAALSW) traverse the membrane as a helical segment. Residues 126–2135 (YAQLRARSFV…LFEYSATSQG (2010 aa)) lie on the Chloroplast intermembrane side of the membrane. Residues 361-370 (RRRYRRKAHS) are compositionally biased toward basic residues. Disordered stretches follow at residues 361–382 (RRRY…SSQQ), 401–492 (SGNP…QVSE), and 1843–1869 (FLGS…SFKP). Composition is skewed to polar residues over residues 373 to 382 (ISDTDNSSQQ), 454 to 490 (NFAS…NEQV), and 1846 to 1856 (SLSTSPDGQQS). The span at 1857–1866 (ETERTPEHGS) shows a compositional bias: basic and acidic residues.

Belongs to the TamB family. Part of the TIC complex, which can interact with components of the TOC complex to form a larger import complex. In terms of tissue distribution, highly expressed in third leaf and developing seeds. Expressed in anthers, pistils, flag leaves and young panicles.

The protein localises to the plastid. The protein resides in the chloroplast inner membrane. It is found in the chloroplast intermembrane space. Its subcellular location is the chloroplast. It localises to the amyloplast. Functionally, part of the inner chloroplast membrane translocon complex (TIC) which associates with the outer chloroplast membrane translocon complex (TOC) and forms a supercomplex involved in protein precursor import into the chloroplast stroma. Required for the regulation of starch granule size in amyloplasts. This is Protein SUBSTANDARD STARCH GRAIN 4, chloroplastic from Oryza sativa subsp. japonica (Rice).